The following is an 86-amino-acid chain: OMEGA-stichotoxin-Shd4a (86 aa).

The N-terminal stretch at 1-23 (MASFRTLFACVVILCCVLWSSMA) is a signal peptide. A propeptide spanning residues 24–36 (RYGEDMEVETEMN) is cleaved from the precursor. The 43-residue stretch at 40–82 (EGVRCTGQHASSFCLNGGTCRHIASLGEYYCICPGDYTGHRCD) folds into the EGF-like domain. 3 disulfides stabilise this stretch: C44-C59, C53-C70, and C72-C81.

The protein belongs to the EGF domain peptide family.

The protein localises to the secreted. Its subcellular location is the nematocyst. Its function is as follows. Has both toxic and EGF activity. Its EGF activity consists of rounding cells (morphological change) and inducing tyrosine phosphorylation of the EGFR in A431 cells, but with a lower potency that human EGF. In Stichodactyla haddoni (Saddle carpet anemone), this protein is OMEGA-stichotoxin-Shd4a.